A 101-amino-acid chain; its full sequence is Urease subunit beta (101 aa).

It belongs to the urease beta subunit family. As to quaternary structure, heterotrimer of UreA (gamma), UreB (beta) and UreC (alpha) subunits. Three heterotrimers associate to form the active enzyme.

The protein resides in the cytoplasm. It carries out the reaction urea + 2 H2O + H(+) = hydrogencarbonate + 2 NH4(+). The protein operates within nitrogen metabolism; urea degradation; CO(2) and NH(3) from urea (urease route): step 1/1. The polypeptide is Urease subunit beta (Rhizobium johnstonii (strain DSM 114642 / LMG 32736 / 3841) (Rhizobium leguminosarum bv. viciae)).